We begin with the raw amino-acid sequence, 359 residues long: MNIYDQLQAVEDRYEELGELLSDPDVVSDTKRFMELSREEASTRETVTAYREYKQVIQNISDAEEMIKDASGDAELEEMAKEELKESKAAKEEYEERLKILLLPKDPNDDKNIILEIRGAAGGDEAALFAGDLLTMYQKYAETQGWRFEVMESSVNGVGGIKEVVAMVSGQSVYSKLKYESGAHRVQRVPVTESQGRVHTSTATVLVMPEVEEVEYEIDQKDLRVDIYHASGAGGQNVNKVATAVRMVHIPTGIKVEMQEERTQQKNRDKAMKIIRARVADHFAQIAQDEQDAERKSTVGTGDRSERIRTYNFPQNRVTDHRIGLTLQKLDTILSGKMDEVIDALVMYDQTQKLEALNK.

Gln236 carries the post-translational modification N5-methylglutamine.

This sequence belongs to the prokaryotic/mitochondrial release factor family. Methylated by PrmC. Methylation increases the termination efficiency of RF1.

The protein localises to the cytoplasm. Peptide chain release factor 1 directs the termination of translation in response to the peptide chain termination codons UAG and UAA. The protein is Peptide chain release factor 1 of Streptococcus agalactiae serotype V (strain ATCC BAA-611 / 2603 V/R).